Reading from the N-terminus, the 380-residue chain is Glucose-1-phosphate adenylyltransferase (380 aa).

Residues Gly164, 179–180, and Ser190 each bind alpha-D-glucose 1-phosphate; that span reads EK.

This sequence belongs to the bacterial/plant glucose-1-phosphate adenylyltransferase family. Homotetramer.

It carries out the reaction alpha-D-glucose 1-phosphate + ATP + H(+) = ADP-alpha-D-glucose + diphosphate. Its pathway is glycan biosynthesis; glycogen biosynthesis. Involved in the biosynthesis of ADP-glucose, a building block required for the elongation reactions to produce glycogen. Catalyzes the reaction between ATP and alpha-D-glucose 1-phosphate (G1P) to produce pyrophosphate and ADP-Glc. This chain is Glucose-1-phosphate adenylyltransferase, found in Lactococcus lactis subsp. cremoris (strain MG1363).